The sequence spans 525 residues: Cytochrome P450 4V2 (525 aa).

The helical transmembrane segment at 13 to 33 (LLLWGAASAVSLAGASLVLSL) threads the bilayer. 2 residues coordinate heme: E329 and C467.

The protein belongs to the cytochrome P450 family. It depends on heme as a cofactor.

Its subcellular location is the endoplasmic reticulum membrane. It carries out the reaction dodecanoate + reduced [NADPH--hemoprotein reductase] + O2 = 12-hydroxydodecanoate + oxidized [NADPH--hemoprotein reductase] + H2O + H(+). The catalysed reaction is tetradecanoate + reduced [NADPH--hemoprotein reductase] + O2 = 14-hydroxytetradecanoate + oxidized [NADPH--hemoprotein reductase] + H2O + H(+). The enzyme catalyses hexadecanoate + reduced [NADPH--hemoprotein reductase] + O2 = 16-hydroxyhexadecanoate + oxidized [NADPH--hemoprotein reductase] + H2O + H(+). It catalyses the reaction (5Z,8Z,11Z,14Z,17Z)-eicosapentaenoate + reduced [NADPH--hemoprotein reductase] + O2 = 20-hydroxy-(5Z,8Z,11Z,14Z,17Z)-eicosapentaenoate + oxidized [NADPH--hemoprotein reductase] + H2O + H(+). It carries out the reaction (4Z,7Z,10Z,13Z,16Z,19Z)-docosahexaenoate + reduced [NADPH--hemoprotein reductase] + O2 = 22-hydroxy-(4Z,7Z,10Z,13Z,16Z,19Z)-docosahexaenoate + oxidized [NADPH--hemoprotein reductase] + H2O + H(+). Its pathway is lipid metabolism; fatty acid metabolism. Its activity is regulated as follows. Inhibited by N-hydroxy-N'-(4-n-butyl-2-methylphenyl formamidine)(HET0016) with an IC(50) of 38 nM. Functionally, a cytochrome P450 monooxygenase involved in fatty acid metabolism in the eye. Catalyzes the omega-hydroxylation of polyunsaturated fatty acids (PUFAs) docosahexaenoate (DHA) and its precursor eicosapentaenoate (EPA), and may contribute to the homeostasis of these retinal PUFAs. Omega hydroxylates saturated fatty acids such as laurate, myristate and palmitate, the catalytic efficiency decreasing in the following order: myristate &gt; laurate &gt; palmitate (C14&gt;C12&gt;C16). Mechanistically, uses molecular oxygen inserting one oxygen atom into a substrate, and reducing the second into a water molecule, with two electrons provided by NADPH via cytochrome P450 reductase (CPR; NADPH-ferrihemoprotein reductase). The polypeptide is Cytochrome P450 4V2 (CYP4V2) (Pongo abelii (Sumatran orangutan)).